A 342-amino-acid chain; its full sequence is Flagellar P-ring protein (342 aa).

The N-terminal stretch at 1 to 19 is a signal peptide; the sequence is MKRVFLWLIFVLAFHKLLA.

Belongs to the FlgI family. The basal body constitutes a major portion of the flagellar organelle and consists of four rings (L,P,S, and M) mounted on a central rod.

It is found in the periplasm. The protein resides in the bacterial flagellum basal body. In terms of biological role, assembles around the rod to form the L-ring and probably protects the motor/basal body from shearing forces during rotation. This is Flagellar P-ring protein from Helicobacter pylori (strain G27).